The chain runs to 616 residues: Glutamine--fructose-6-phosphate aminotransferase [isomerizing] (616 aa).

C2 serves as the catalytic Nucleophile; for GATase activity. A Glutamine amidotransferase type-2 domain is found at 2-222 (CGIIGYSGPR…QERIVALSGD (221 aa)). The interval 70–89 (TGIGHTRWATHGEPSDRNAH) is disordered. 2 SIS domains span residues 289 to 428 (IRDD…LRGF) and 461 to 606 (LAHW…VDRP). K611 acts as the For Fru-6P isomerization activity in catalysis.

In terms of assembly, homodimer.

It is found in the cytoplasm. It catalyses the reaction D-fructose 6-phosphate + L-glutamine = D-glucosamine 6-phosphate + L-glutamate. In terms of biological role, catalyzes the first step in hexosamine metabolism, converting fructose-6P into glucosamine-6P using glutamine as a nitrogen source. The chain is Glutamine--fructose-6-phosphate aminotransferase [isomerizing] from Tropheryma whipplei (strain TW08/27) (Whipple's bacillus).